Reading from the N-terminus, the 201-residue chain is MDLTLLWVLLPLVTTAWGQYGGYGYPYQQYQDYGDDGWVNLNRQGFSYQCPHGQVVVAVRSIFSKKEGSDRQWNYACMPTPQSLGEPTECWWEEINRAGMEWYQKCSNNGLVAGFQSRYFESVLDREWQFYCCRYSKRCPYSCWMTTEYPSHYGEDMDMISYDYDFYMRGATTTFSAVERDRQWKFIMCRMTDYDCEFENV.

The first 18 residues, 1–18 (MDLTLLWVLLPLVTTAWG), serve as a signal peptide directing secretion. Glutamine 19 is subject to Pyrrolidone carboxylic acid. The interval 19 to 186 (QYGGYGYPYQ…AVERDRQWKF (168 aa)) is 2 X 53-55 AA tandem repeats. Tyrosine 23 carries the sulfotyrosine modification. 4 consecutive repeat copies span residues 26-79 (PYQQ…ACMP), 70-75 (DRQWNY), 80-135 (TPQS…CCRY), and 125-130 (DREWQF). Cystine bridges form between cysteine 50/cysteine 77, cysteine 90/cysteine 132, cysteine 106/cysteine 133, cysteine 139/cysteine 196, and cysteine 143/cysteine 189. The tract at residues 70–186 (DRQWNYACMP…AVERDRQWKF (117 aa)) is 3 X 6 AA tandem repeats of D-R-[EQ]-W-[NQK]-[FY]. Sulfotyrosine occurs at positions 162, 164, and 167. A 2-3 repeat occupies 181-186 (DRQWKF). Tyrosine 194 carries the sulfotyrosine modification.

It belongs to the dermatopontin family. As to quaternary structure, interacts with TGFB1, DCN and collagen. Sulfated on tyrosine residue(s).

It localises to the secreted. It is found in the extracellular space. The protein resides in the extracellular matrix. In terms of biological role, seems to mediate adhesion by cell surface integrin binding. May serve as a communication link between the dermal fibroblast cell surface and its extracellular matrix environment. Enhances TGFB1 activity. Inhibits cell proliferation. Accelerates collagen fibril formation, and stabilizes collagen fibrils against low-temperature dissociation. This Mus musculus (Mouse) protein is Dermatopontin (Dpt).